The following is a 246-amino-acid chain: Uridylate kinase (246 aa).

ATP is bound at residue 18–21 (KLSG). G60 provides a ligand contact to UMP. ATP-binding residues include G61 and R65. UMP contacts are provided by residues D80 and 141–148 (TGNPFFTT). T168, Y174, and D177 together coordinate ATP.

It belongs to the UMP kinase family. As to quaternary structure, homohexamer.

The protein localises to the cytoplasm. The enzyme catalyses UMP + ATP = UDP + ADP. It functions in the pathway pyrimidine metabolism; CTP biosynthesis via de novo pathway; UDP from UMP (UMPK route): step 1/1. Its activity is regulated as follows. Inhibited by UTP. Functionally, catalyzes the reversible phosphorylation of UMP to UDP. In Pseudomonas syringae pv. syringae (strain B728a), this protein is Uridylate kinase.